The chain runs to 474 residues: tRNA-2-methylthio-N(6)-dimethylallyladenosine synthase (474 aa).

In terms of domain architecture, MTTase N-terminal spans lysine 3 to glycine 120. [4Fe-4S] cluster-binding residues include cysteine 12, cysteine 49, cysteine 83, cysteine 157, cysteine 161, and cysteine 164. The region spanning arginine 143–glutamate 375 is the Radical SAM core domain. A TRAM domain is found at arginine 378–arginine 441.

This sequence belongs to the methylthiotransferase family. MiaB subfamily. In terms of assembly, monomer. [4Fe-4S] cluster is required as a cofactor.

The protein localises to the cytoplasm. It carries out the reaction N(6)-dimethylallyladenosine(37) in tRNA + (sulfur carrier)-SH + AH2 + 2 S-adenosyl-L-methionine = 2-methylsulfanyl-N(6)-dimethylallyladenosine(37) in tRNA + (sulfur carrier)-H + 5'-deoxyadenosine + L-methionine + A + S-adenosyl-L-homocysteine + 2 H(+). Its function is as follows. Catalyzes the methylthiolation of N6-(dimethylallyl)adenosine (i(6)A), leading to the formation of 2-methylthio-N6-(dimethylallyl)adenosine (ms(2)i(6)A) at position 37 in tRNAs that read codons beginning with uridine. The polypeptide is tRNA-2-methylthio-N(6)-dimethylallyladenosine synthase (Yersinia pseudotuberculosis serotype O:1b (strain IP 31758)).